The primary structure comprises 452 residues: Probable glycine dehydrogenase (decarboxylating) subunit 1 (452 aa).

This sequence belongs to the GcvP family. N-terminal subunit subfamily. The glycine cleavage system is composed of four proteins: P, T, L and H. In this organism, the P 'protein' is a heterodimer of two subunits.

The enzyme catalyses N(6)-[(R)-lipoyl]-L-lysyl-[glycine-cleavage complex H protein] + glycine + H(+) = N(6)-[(R)-S(8)-aminomethyldihydrolipoyl]-L-lysyl-[glycine-cleavage complex H protein] + CO2. In terms of biological role, the glycine cleavage system catalyzes the degradation of glycine. The P protein binds the alpha-amino group of glycine through its pyridoxal phosphate cofactor; CO(2) is released and the remaining methylamine moiety is then transferred to the lipoamide cofactor of the H protein. In Nitrosospira multiformis (strain ATCC 25196 / NCIMB 11849 / C 71), this protein is Probable glycine dehydrogenase (decarboxylating) subunit 1.